Reading from the N-terminus, the 151-residue chain is Putative pre-16S rRNA nuclease (151 aa).

This sequence belongs to the YqgF nuclease family.

Its subcellular location is the cytoplasm. Functionally, could be a nuclease involved in processing of the 5'-end of pre-16S rRNA. The sequence is that of Putative pre-16S rRNA nuclease from Myxococcus xanthus (strain DK1622).